A 217-amino-acid chain; its full sequence is 3-oxo-tetronate 4-phosphate decarboxylase (217 aa).

Positions 93 and 95 each coordinate Zn(2+). Catalysis depends on Tyr-120, which acts as the Proton donor.

The protein belongs to the aldolase class II family. AraD/FucA subfamily. Zn(2+) serves as cofactor.

It carries out the reaction 3-dehydro-4-O-phospho-D-erythronate + H(+) = dihydroxyacetone phosphate + CO2. It catalyses the reaction 3-dehydro-4-O-phospho-L-erythronate + H(+) = dihydroxyacetone phosphate + CO2. Catalyzes the decarboxylation of 3-oxo-tetronate 4-phosphate to dihydroxyacetone phosphate (DHAP) and CO(2). This Cupriavidus necator (strain ATCC 17699 / DSM 428 / KCTC 22496 / NCIMB 10442 / H16 / Stanier 337) (Ralstonia eutropha) protein is 3-oxo-tetronate 4-phosphate decarboxylase.